We begin with the raw amino-acid sequence, 309 residues long: Aspartate carbamoyltransferase catalytic subunit (309 aa).

The carbamoyl phosphate site is built by Arg58 and Thr59. Lys86 contributes to the L-aspartate binding site. The carbamoyl phosphate site is built by Arg108, His136, and Gln139. L-aspartate-binding residues include Arg169 and Arg223. Carbamoyl phosphate contacts are provided by Gly264 and Pro265.

This sequence belongs to the aspartate/ornithine carbamoyltransferase superfamily. ATCase family. Heterododecamer (2C3:3R2) of six catalytic PyrB chains organized as two trimers (C3), and six regulatory PyrI chains organized as three dimers (R2).

It carries out the reaction carbamoyl phosphate + L-aspartate = N-carbamoyl-L-aspartate + phosphate + H(+). The protein operates within pyrimidine metabolism; UMP biosynthesis via de novo pathway; (S)-dihydroorotate from bicarbonate: step 2/3. Its function is as follows. Catalyzes the condensation of carbamoyl phosphate and aspartate to form carbamoyl aspartate and inorganic phosphate, the committed step in the de novo pyrimidine nucleotide biosynthesis pathway. The sequence is that of Aspartate carbamoyltransferase catalytic subunit from Pelotomaculum thermopropionicum (strain DSM 13744 / JCM 10971 / SI).